The following is an 878-amino-acid chain: Microtubule-associated protein homolog maph-1.1 (878 aa).

Disordered stretches follow at residues 224-425 and 456-518; these read ALSD…AQAT and EIPP…PVVP. Low complexity-rich tracts occupy residues 241–268, 278–293, 310–321, and 328–339; these read PSAR…APRA, SRPT…PRTA, APTRAPVPARSA, and APAKPAANTAKA. 2 stretches are compositionally biased toward basic and acidic residues: residues 416–425 and 480–496; these read PPRHEVAQAT and EEDK…KPDP.

Belongs to the MAP1A/MAP1B/MAP1S family. As to quaternary structure, interacts with dlg-1.

The protein localises to the cell projection. It localises to the dendrite. Its subcellular location is the perikaryon. It is found in the axon. The protein resides in the cytoplasm. The protein localises to the cytoskeleton. The sequence is that of Microtubule-associated protein homolog maph-1.1 from Caenorhabditis elegans.